Consider the following 448-residue polypeptide: NADP-specific glutamate dehydrogenase (448 aa).

The substrate site is built by Lys88, Gln109, and Lys112. Lys124 acts as the Proton donor in catalysis. Residue Gly163 participates in substrate binding. NADP(+)-binding residues include Thr207 and Asn238. Ser381 is a substrate binding site.

Belongs to the Glu/Leu/Phe/Val dehydrogenases family. Homohexamer.

The catalysed reaction is L-glutamate + NADP(+) + H2O = 2-oxoglutarate + NH4(+) + NADPH + H(+). In terms of biological role, catalyzes the reversible oxidative deamination of glutamate to alpha-ketoglutarate and ammonia. The protein is NADP-specific glutamate dehydrogenase (gdhA) of Helicobacter pylori (strain ATCC 700392 / 26695) (Campylobacter pylori).